The chain runs to 720 residues: Fatty acid CoA ligase Acsl3 (720 aa).

A helical; Signal-anchor for type III membrane protein membrane pass occupies residues 21-41 (ILLYFIHFIISLYTILTYIPF). The Cytoplasmic portion of the chain corresponds to 42-720 (YFLCESKQEK…ADIERMYGRK (679 aa)). S683 carries the phosphoserine modification.

It belongs to the ATP-dependent AMP-binding enzyme family. Requires Mg(2+) as cofactor.

It is found in the mitochondrion outer membrane. Its subcellular location is the peroxisome membrane. The protein resides in the microsome membrane. The protein localises to the endoplasmic reticulum membrane. It catalyses the reaction a long-chain fatty acid + ATP + CoA = a long-chain fatty acyl-CoA + AMP + diphosphate. It carries out the reaction (E)-hexadec-2-enoate + ATP + CoA = (2E)-hexadecenoyl-CoA + AMP + diphosphate. The enzyme catalyses (5Z,8Z,11Z,14Z)-eicosatetraenoate + ATP + CoA = (5Z,8Z,11Z,14Z)-eicosatetraenoyl-CoA + AMP + diphosphate. The catalysed reaction is 15-hydroxy-(5Z,8Z,11Z,13E)-eicosatetraenoate + ATP + CoA = 15-hydroxy-(5Z,8Z,11Z,13E)-eicosatetraenoyl-CoA + AMP + diphosphate. It catalyses the reaction 12-hydroxy-(5Z,8Z,10E,14Z)-eicosatetraenoate + ATP + CoA = 12-hydroxy-(5Z,8Z,10E,14Z)-eicosatetraenoyl-CoA + AMP + diphosphate. It carries out the reaction 5-hydroxy-(6E,8Z,11Z,14Z)-eicosatetraenoate + ATP + CoA = 5-hydroxy-(6E,8Z,11Z,14Z)-eicosatetraenoyl-CoA + AMP + diphosphate. The enzyme catalyses 14,15-epoxy-(5Z,8Z,11Z)-eicosatrienoate + ATP + CoA = 14,15-epoxy-(5Z,8Z,11Z)-eicosatrienoyl-CoA + AMP + diphosphate. The catalysed reaction is 11,12-epoxy-(5Z,8Z,14Z)-eicosatrienoate + ATP + CoA = 11,12-epoxy-(5Z,8Z,14Z)-eicosatrienoyl-CoA + AMP + diphosphate. It catalyses the reaction a medium-chain fatty acid + ATP + CoA = a medium-chain fatty acyl-CoA + AMP + diphosphate. It carries out the reaction hexadecanoate + ATP + CoA = hexadecanoyl-CoA + AMP + diphosphate. The enzyme catalyses tetradecanoate + ATP + CoA = tetradecanoyl-CoA + AMP + diphosphate. The catalysed reaction is dodecanoate + ATP + CoA = dodecanoyl-CoA + AMP + diphosphate. It catalyses the reaction octadecanoate + ATP + CoA = octadecanoyl-CoA + AMP + diphosphate. It carries out the reaction eicosanoate + ATP + CoA = eicosanoyl-CoA + AMP + diphosphate. The enzyme catalyses (9Z)-octadecenoate + ATP + CoA = (9Z)-octadecenoyl-CoA + AMP + diphosphate. The catalysed reaction is (9Z)-hexadecenoate + ATP + CoA = (9Z)-hexadecenoyl-CoA + AMP + diphosphate. It catalyses the reaction (9Z,12Z)-octadecadienoate + ATP + CoA = (9Z,12Z)-octadecadienoyl-CoA + AMP + diphosphate. It carries out the reaction (9Z,12Z,15Z)-octadecatrienoate + ATP + CoA = (9Z,12Z,15Z)-octadecatrienoyl-CoA + AMP + diphosphate. The enzyme catalyses (4Z,7Z,10Z,13Z,16Z,19Z)-docosahexaenoate + ATP + CoA = (4Z,7Z,10Z,13Z,16Z,19Z)-docosahexaenoyl-CoA + AMP + diphosphate. The catalysed reaction is (5Z,8Z,11Z,14Z,17Z)-eicosapentaenoate + ATP + CoA = (5Z,8Z,11Z,14Z,17Z)-eicosapentaenoyl-CoA + AMP + diphosphate. It catalyses the reaction a fatty acid + ATP + CoA = a fatty acyl-CoA + AMP + diphosphate. Acyl-CoA synthetases (ACSL) activates long-chain fatty acids for both synthesis of cellular lipids, and degradation via beta-oxidation. ACSL3 is required for the incorporation of fatty acids into phosphatidylcholine, the major phospholipid located on the surface of VLDL (very low density lipoproteins). Has mainly an anabolic role in energy metabolism. Mediates hepatic lipogenesis. Preferentially uses myristate, laurate, arachidonate and eicosapentaenoate as substrates. Both isoforms exhibit the same level of activity. This chain is Fatty acid CoA ligase Acsl3, found in Mus musculus (Mouse).